The chain runs to 235 residues: Small ribosomal subunit protein uS3 (235 aa).

In terms of domain architecture, KH type-2 spans 39-107; the sequence is IREFIKEECK…ELHLNIVEVR (69 aa). The segment at 213-235 is disordered; that stretch reads QARDRKAQELQDGPAPRGAGGRR.

Belongs to the universal ribosomal protein uS3 family. In terms of assembly, part of the 30S ribosomal subunit. Forms a tight complex with proteins S10 and S14.

Binds the lower part of the 30S subunit head. Binds mRNA in the 70S ribosome, positioning it for translation. In Ruegeria pomeroyi (strain ATCC 700808 / DSM 15171 / DSS-3) (Silicibacter pomeroyi), this protein is Small ribosomal subunit protein uS3.